The sequence spans 400 residues: Riboflavin biosynthesis protein RibBA (400 aa).

Positions 1–202 are DHBP synthase; sequence MTTFGTIEQA…IADLVMYRRR (202 aa). D-ribulose 5-phosphate is bound by residues 28 to 29, D33, 141 to 145, and E165; these read RE and RTGHT. Residue E29 coordinates Mg(2+). H144 contributes to the Mg(2+) binding site. Residues 203 to 400 are GTP cyclohydrolase II; it reads TEKQVELVAE…KRDRMGHLLG (198 aa). Residue 253-257 participates in GTP binding; that stretch reads RAHSE. The Zn(2+) site is built by C258, C269, and C271. Residues Q274, 297–299, and T319 each bind GTP; that span reads EGR. The Proton acceptor; for GTP cyclohydrolase activity role is filled by D331. R333 (nucleophile; for GTP cyclohydrolase activity) is an active-site residue. GTP-binding residues include T354 and K359.

This sequence in the N-terminal section; belongs to the DHBP synthase family. It in the C-terminal section; belongs to the GTP cyclohydrolase II family. It depends on Mg(2+) as a cofactor. The cofactor is Mn(2+). Zn(2+) is required as a cofactor.

The catalysed reaction is D-ribulose 5-phosphate = (2S)-2-hydroxy-3-oxobutyl phosphate + formate + H(+). The enzyme catalyses GTP + 4 H2O = 2,5-diamino-6-hydroxy-4-(5-phosphoribosylamino)-pyrimidine + formate + 2 phosphate + 3 H(+). It functions in the pathway cofactor biosynthesis; riboflavin biosynthesis; 2-hydroxy-3-oxobutyl phosphate from D-ribulose 5-phosphate: step 1/1. It participates in cofactor biosynthesis; riboflavin biosynthesis; 5-amino-6-(D-ribitylamino)uracil from GTP: step 1/4. Catalyzes the conversion of D-ribulose 5-phosphate to formate and 3,4-dihydroxy-2-butanone 4-phosphate. Its function is as follows. Catalyzes the conversion of GTP to 2,5-diamino-6-ribosylamino-4(3H)-pyrimidinone 5'-phosphate (DARP), formate and pyrophosphate. In Salinispora tropica (strain ATCC BAA-916 / DSM 44818 / JCM 13857 / NBRC 105044 / CNB-440), this protein is Riboflavin biosynthesis protein RibBA.